The following is a 435-amino-acid chain: Serine--tRNA ligase (435 aa).

An L-serine-binding site is contributed by 242–244 (TAE). Position 273–275 (273–275 (RSE)) interacts with ATP. Glu296 contacts L-serine. Position 360–363 (360–363 (EISS)) interacts with ATP. Ser396 is a binding site for L-serine.

The protein belongs to the class-II aminoacyl-tRNA synthetase family. Type-1 seryl-tRNA synthetase subfamily. As to quaternary structure, homodimer. The tRNA molecule binds across the dimer.

Its subcellular location is the cytoplasm. It carries out the reaction tRNA(Ser) + L-serine + ATP = L-seryl-tRNA(Ser) + AMP + diphosphate + H(+). It catalyses the reaction tRNA(Sec) + L-serine + ATP = L-seryl-tRNA(Sec) + AMP + diphosphate + H(+). It participates in aminoacyl-tRNA biosynthesis; selenocysteinyl-tRNA(Sec) biosynthesis; L-seryl-tRNA(Sec) from L-serine and tRNA(Sec): step 1/1. Its function is as follows. Catalyzes the attachment of serine to tRNA(Ser). Is also able to aminoacylate tRNA(Sec) with serine, to form the misacylated tRNA L-seryl-tRNA(Sec), which will be further converted into selenocysteinyl-tRNA(Sec). The chain is Serine--tRNA ligase from Vibrio cholerae serotype O1 (strain ATCC 39541 / Classical Ogawa 395 / O395).